The chain runs to 450 residues: Malate:quinone oxidoreductase (450 aa).

Belongs to the MQO family. FAD serves as cofactor.

It localises to the cell membrane. It carries out the reaction (S)-malate + a quinone = a quinol + oxaloacetate. It participates in carbohydrate metabolism; tricarboxylic acid cycle; oxaloacetate from (S)-malate (quinone route): step 1/1. In terms of biological role, catalyzes oxidation of malate to oxaloacetate in the citric acid cycle. Donates electrons to quinones of the electron transfer chain. In Helicobacter pylori (strain ATCC 700392 / 26695) (Campylobacter pylori), this protein is Malate:quinone oxidoreductase (mqo).